A 110-amino-acid chain; its full sequence is UPF0060 membrane protein Bcep18194_A4425 (110 aa).

The next 4 helical transmembrane spans lie at 9–29, 34–54, 66–86, and 88–108; these read ALFAATALAEIVGCYLPWLVL, PVWLLVPAALSLALFAWLLTL, YGGVYIAVALVWLRVVDGVAL, and RWDVAGAVLALGGMAVIALQP.

Belongs to the UPF0060 family.

The protein resides in the cell inner membrane. This Burkholderia lata (strain ATCC 17760 / DSM 23089 / LMG 22485 / NCIMB 9086 / R18194 / 383) protein is UPF0060 membrane protein Bcep18194_A4425.